We begin with the raw amino-acid sequence, 87 residues long: Guanine nucleotide-binding protein subunit gamma (87 aa).

Residue cysteine 84 is modified to Cysteine methyl ester. Cysteine 84 carries the S-geranylgeranyl cysteine lipid modification. Positions 85–87 (LLV) are cleaved as a propeptide — removed in mature form.

The protein belongs to the G protein gamma family. In terms of assembly, g proteins are composed of 3 units, alpha, beta and gamma. Post-translationally, the N-terminus is blocked.

The protein localises to the cell membrane. Functionally, guanine nucleotide-binding proteins (G proteins) are involved as a modulator or transducer in various transmembrane signaling systems. This major G-protein of the squid photoreceptor is involved in visual transduction. The beta and gamma chains are required for the GTPase activity, for replacement of GDP by GTP, and for G protein-effector interaction. This is Guanine nucleotide-binding protein subunit gamma from Loligo forbesii (Veined squid).